The chain runs to 475 residues: Rho GTPase-activating protein 15 (475 aa).

The span at 1–22 shows a compositional bias: polar residues; the sequence is MQKSTNSDTSVETLNSTRQGTG. A disordered region spans residues 1–23; it reads MQKSTNSDTSVETLNSTRQGTGA. Phosphoserine is present on residues S43, S103, S196, S199, and S243. The region spanning 79–189 is the PH domain; it reads MVEKEGYLQK…WFHAIKNAID (111 aa). Residues 281–470 form the Rho-GAP domain; it reads SHLHKVCERE…LMLSEYSKIF (190 aa).

In terms of tissue distribution, expressed in lung, liver and lymphoid cells.

It is found in the cytoplasm. Its subcellular location is the membrane. GTPase activator for the Rho-type GTPases by converting them to an inactive GDP-bound state. Has activity toward RAC1. Overexpression results in an increase in actin stress fibers and cell contraction. The sequence is that of Rho GTPase-activating protein 15 (ARHGAP15) from Homo sapiens (Human).